The following is a 111-amino-acid chain: Dormancy-associated protein 1 (111 aa).

The interval 30-60 is disordered; it reads KDDGASNQLMRSTSIPTTPTTPVTPTTPSSA. The segment covering 41–59 has biased composition (low complexity); sequence STSIPTTPTTPVTPTTPSS.

This sequence belongs to the DRM1/ARP family. As to expression, expressed in axilary buds and in non-growing stems and roots. Detected in sepals, stamens and carpels, but barely detected in petals or leaflets.

This chain is Dormancy-associated protein 1, found in Pisum sativum (Garden pea).